The sequence spans 124 residues: AESSAMKFERQHVDSGGSSSSNANYCNEMMKKREMTKDRCKPVNTFVHEPLAEVQAVCSQRNVSCKNGQTNCYQSYSSMHITECRLTSGSKFPNCSYRTSQAQKSIIVACEGKPYVPVHFDNSV.

Positions 1 to 24 (AESSAMKFERQHVDSGGSSSSNAN) are disordered. Residues Lys-7 and Arg-10 each contribute to the substrate site. His-12 functions as the Proton acceptor in the catalytic mechanism. Disulfide bonds link Cys-26–Cys-84, Cys-40–Cys-95, Cys-58–Cys-110, and Cys-65–Cys-72. Substrate contacts are provided by residues 41–45 (KPVNT), Lys-66, and Arg-85. Catalysis depends on His-119, which acts as the Proton donor.

Belongs to the pancreatic ribonuclease family. Pancreas.

The protein localises to the secreted. It carries out the reaction an [RNA] containing cytidine + H2O = an [RNA]-3'-cytidine-3'-phosphate + a 5'-hydroxy-ribonucleotide-3'-[RNA].. It catalyses the reaction an [RNA] containing uridine + H2O = an [RNA]-3'-uridine-3'-phosphate + a 5'-hydroxy-ribonucleotide-3'-[RNA].. The protein is Ribonuclease pancreatic A of Cavia porcellus (Guinea pig).